We begin with the raw amino-acid sequence, 262 residues long: MNPDVNAISPAEARRRFRDGLVTPTAGWSAGYAQANLIAVPRDYAFDLMLFAQRNPKPCPVLDVLEPGQYAGPLLAGGDIRTDIPAYRIYVDGELVTEVADATEYWTDDLVAFLIGCSFSFEAALLDSGVPVRHIEEDVNVPMYRTDRPCRSAGRIGGPLVVSMRPLPPEQVADAVRITSRYPSVHGTPVHVGDPAGLGIAHLSAPDYGDAVTIRPGEIPVFWACGVTPQAAVMQSRPPLAIGHAPGHMLITDLRDSELVVP.

The protein belongs to the D-glutamate cyclase family.

The polypeptide is Putative hydro-lyase Mflv_5194 (Mycolicibacterium gilvum (strain PYR-GCK) (Mycobacterium gilvum (strain PYR-GCK))).